The following is a 72-amino-acid chain: Large ribosomal subunit protein uL29 (72 aa).

This sequence belongs to the universal ribosomal protein uL29 family.

This chain is Large ribosomal subunit protein uL29, found in Chlamydia abortus (strain DSM 27085 / S26/3) (Chlamydophila abortus).